An 85-amino-acid polypeptide reads, in one-letter code: Large ribosomal subunit protein bL31B (85 aa).

Belongs to the bacterial ribosomal protein bL31 family. Type B subfamily. As to quaternary structure, part of the 50S ribosomal subunit.

The chain is Large ribosomal subunit protein bL31B from Staphylococcus saprophyticus subsp. saprophyticus (strain ATCC 15305 / DSM 20229 / NCIMB 8711 / NCTC 7292 / S-41).